Consider the following 544-residue polypeptide: uncharacterized protein (544 aa).

Transmembrane regions (helical) follow at residues 31-51, 52-72, 84-104, 116-136, 162-182, 191-211, 230-250, 257-277, 318-338, 356-376, 383-403, 407-427, 450-470, and 501-521; these read ILVF…AALA, GSVL…IGLL, LPWM…QWLI, WGLF…YTTV, FAFS…IAAG, FGEL…WSAL, LAPL…AKSF, GFDY…GFGF, FLFV…TASI, TIAL…QALA, VIYF…WLVQ, VALL…AYLI, FFYA…LFLV, and FAVA…AIFY.

This sequence belongs to the sodium:galactoside symporter (TC 2.A.2) family.

It localises to the cell membrane. This is an uncharacterized protein from Synechocystis sp. (strain ATCC 27184 / PCC 6803 / Kazusa).